Here is a 572-residue protein sequence, read N- to C-terminus: Proline--tRNA ligase (572 aa).

Belongs to the class-II aminoacyl-tRNA synthetase family. ProS type 1 subfamily. Homodimer.

It is found in the cytoplasm. It catalyses the reaction tRNA(Pro) + L-proline + ATP = L-prolyl-tRNA(Pro) + AMP + diphosphate. Catalyzes the attachment of proline to tRNA(Pro) in a two-step reaction: proline is first activated by ATP to form Pro-AMP and then transferred to the acceptor end of tRNA(Pro). As ProRS can inadvertently accommodate and process non-cognate amino acids such as alanine and cysteine, to avoid such errors it has two additional distinct editing activities against alanine. One activity is designated as 'pretransfer' editing and involves the tRNA(Pro)-independent hydrolysis of activated Ala-AMP. The other activity is designated 'posttransfer' editing and involves deacylation of mischarged Ala-tRNA(Pro). The misacylated Cys-tRNA(Pro) is not edited by ProRS. The sequence is that of Proline--tRNA ligase from Shigella dysenteriae serotype 1 (strain Sd197).